A 174-amino-acid polypeptide reads, in one-letter code: MTIILGIDPGSRVTGYGLIKESDRKIAYIDSGCIRTSNDAELSHKLLQIYDGICELMDHYSPTEVAIEQIFMHNNPNSALKLGHARGVAMVAAASHRAKICEYSAREIKQSVVGYGAAEKDQVSHMVVELLQLNRAPQKDAADALAIAICHSHMRNGLSKLIGSRGTKRRRMRL.

Catalysis depends on residues D8, E68, and D140. The Mg(2+) site is built by D8, E68, and D140.

Belongs to the RuvC family. Homodimer which binds Holliday junction (HJ) DNA. The HJ becomes 2-fold symmetrical on binding to RuvC with unstacked arms; it has a different conformation from HJ DNA in complex with RuvA. In the full resolvosome a probable DNA-RuvA(4)-RuvB(12)-RuvC(2) complex forms which resolves the HJ. It depends on Mg(2+) as a cofactor.

It localises to the cytoplasm. It carries out the reaction Endonucleolytic cleavage at a junction such as a reciprocal single-stranded crossover between two homologous DNA duplexes (Holliday junction).. In terms of biological role, the RuvA-RuvB-RuvC complex processes Holliday junction (HJ) DNA during genetic recombination and DNA repair. Endonuclease that resolves HJ intermediates. Cleaves cruciform DNA by making single-stranded nicks across the HJ at symmetrical positions within the homologous arms, yielding a 5'-phosphate and a 3'-hydroxyl group; requires a central core of homology in the junction. The consensus cleavage sequence is 5'-(A/T)TT(C/G)-3'. Cleavage occurs on the 3'-side of the TT dinucleotide at the point of strand exchange. HJ branch migration catalyzed by RuvA-RuvB allows RuvC to scan DNA until it finds its consensus sequence, where it cleaves and resolves the cruciform DNA. This chain is Crossover junction endodeoxyribonuclease RuvC, found in Legionella pneumophila (strain Corby).